The following is a 391-amino-acid chain: Elongation factor Tu (391 aa).

The tr-type G domain maps to 10 to 201; the sequence is KPHVNIGTIG…AVDDYIPTPE (192 aa). A G1 region spans residues 19–26; sequence GHVDHGKT. GTP is bound at residue 19-26; the sequence is GHVDHGKT. Mg(2+) is bound at residue Thr-26. Residues 55–59 form a G2 region; that stretch reads GITIS. Residues 76–79 are G3; that stretch reads DCPG. GTP is bound by residues 76–80 and 131–134; these read DCPGH and NKCD. The G4 stretch occupies residues 131 to 134; the sequence is NKCD. Residues 169-171 are G5; that stretch reads SAL.

This sequence belongs to the TRAFAC class translation factor GTPase superfamily. Classic translation factor GTPase family. EF-Tu/EF-1A subfamily. As to quaternary structure, monomer.

It localises to the cytoplasm. It carries out the reaction GTP + H2O = GDP + phosphate + H(+). In terms of biological role, GTP hydrolase that promotes the GTP-dependent binding of aminoacyl-tRNA to the A-site of ribosomes during protein biosynthesis. The polypeptide is Elongation factor Tu (Brucella anthropi (strain ATCC 49188 / DSM 6882 / CCUG 24695 / JCM 21032 / LMG 3331 / NBRC 15819 / NCTC 12168 / Alc 37) (Ochrobactrum anthropi)).